The chain runs to 961 residues: Glycine dehydrogenase (decarboxylating) (961 aa).

N6-(pyridoxal phosphate)lysine is present on Lys-709.

Belongs to the GcvP family. As to quaternary structure, the glycine cleavage system is composed of four proteins: P, T, L and H. The cofactor is pyridoxal 5'-phosphate.

The enzyme catalyses N(6)-[(R)-lipoyl]-L-lysyl-[glycine-cleavage complex H protein] + glycine + H(+) = N(6)-[(R)-S(8)-aminomethyldihydrolipoyl]-L-lysyl-[glycine-cleavage complex H protein] + CO2. In terms of biological role, the glycine cleavage system catalyzes the degradation of glycine. The P protein binds the alpha-amino group of glycine through its pyridoxal phosphate cofactor; CO(2) is released and the remaining methylamine moiety is then transferred to the lipoamide cofactor of the H protein. The chain is Glycine dehydrogenase (decarboxylating) from Teredinibacter turnerae (strain ATCC 39867 / T7901).